Consider the following 340-residue polypeptide: Nicotinate-nucleotide--dimethylbenzimidazole phosphoribosyltransferase (340 aa).

E305 serves as the catalytic Proton acceptor.

This sequence belongs to the CobT family.

The catalysed reaction is 5,6-dimethylbenzimidazole + nicotinate beta-D-ribonucleotide = alpha-ribazole 5'-phosphate + nicotinate + H(+). Its pathway is nucleoside biosynthesis; alpha-ribazole biosynthesis; alpha-ribazole from 5,6-dimethylbenzimidazole: step 1/2. Functionally, catalyzes the synthesis of alpha-ribazole-5'-phosphate from nicotinate mononucleotide (NAMN) and 5,6-dimethylbenzimidazole (DMB). The protein is Nicotinate-nucleotide--dimethylbenzimidazole phosphoribosyltransferase of Allorhizobium ampelinum (strain ATCC BAA-846 / DSM 112012 / S4) (Agrobacterium vitis (strain S4)).